Here is a 756-residue protein sequence, read N- to C-terminus: Disintegrin and metalloproteinase domain-containing protein 5 (756 aa).

The N-terminal stretch at 1 to 16 (MFLLLVLLTGLGGMHA) is a signal peptide. A propeptide spanning residues 17–142 (DLNPHKTFLQ…AVSGFIHKIY (126 aa)) is cleaved from the precursor. The Extracellular segment spans residues 17–698 (DLNPHKTFLQ…GRHAPFQKQR (682 aa)). In terms of domain architecture, Peptidase M12B spans 183–380 (RYIEMHIVVD…NGLTCLQTNP (198 aa)). 4 cysteine pairs are disulfide-bonded: Cys292–Cys375, Cys334–Cys359, Cys336–Cys341, and Cys449–Cys470. In terms of domain architecture, Disintegrin spans 389–478 (RRICGNGLLE…YCLLDTYVRD (90 aa)). Asn559 is a glycosylation site (N-linked (GlcNAc...) asparagine). An EGF-like domain is found at 630–664 (DFETCEASIECSGHGICNNFNHCHCEKGYNPPHCK). Intrachain disulfides connect Cys634–Cys646, Cys640–Cys652, and Cys654–Cys663. A helical membrane pass occupies residues 699–719 (FQLIFYISLPVLIITTAILIK). Over 720–756 (RKKLRELCYRGETESESSVSQESSSNSKSSLSESTSL) the chain is Cytoplasmic. Residues 731–756 (ETESESSVSQESSSNSKSSLSESTSL) form a disordered region. The span at 735–756 (ESSVSQESSSNSKSSLSESTSL) shows a compositional bias: low complexity.

Interacts with TEX101. Post-translationally, subject to proteolytic processing during epididymal transit of spermatozoa. Detected in testis (at protein level). Detected in adult and prepubertal testis. Detected at very low levels in heart, kidney, brain, muscle ovary and uterus.

Its subcellular location is the membrane. Functionally, this is a non catalytic metalloprotease-like protein. May play a role in sperm-egg fusion. This is Disintegrin and metalloproteinase domain-containing protein 5 (ADAM5) from Macaca fascicularis (Crab-eating macaque).